Reading from the N-terminus, the 336-residue chain is Transcription factor MYB29 (336 aa).

HTH myb-type domains lie at 9–65 and 66–116; these read GEGL…KPDI and KRGE…KKLL. 2 consecutive DNA-binding regions (H-T-H motif) follow at residues 37 to 61 and 89 to 112; these read WRDI…ANYL and WSVI…NTHL. Residues 127-170 are disordered; the sequence is KPLAYDSNPDEQSQSGSISPKSLPPSSSKNVPEITSSDETPKYD. The segment covering 141–154 has biased composition (low complexity); that stretch reads SGSISPKSLPPSSS. The span at 155 to 164 shows a compositional bias: polar residues; it reads KNVPEITSSD.

Can form complexes with MYC2, MYC3 or MYC4. Expressed in both vegetative and generative organs. Mostly present in seedlings, inflorescences, roots and stems, and, to a lower extent, in leaves (in midvein and trichomes) and siliques.

It is found in the nucleus. Plays a minor rheostat role in aliphatic glucosinolates (GLSs) biosynthesis, mostly short chained. Together with MYB28/HAG1 and MYB76/HAG2, promotes aliphatic glucosinolate biosynthesis but represses indolic glucosinolate biosynthesis. Prevents insect performance (e.g. lepidopteran insect Mamestra brassicae) by promoting glucosinolates. The chain is Transcription factor MYB29 (MYB29) from Arabidopsis thaliana (Mouse-ear cress).